A 546-amino-acid polypeptide reads, in one-letter code: Chaperonin GroEL (546 aa).

Residues 30-33, K51, 87-91, G415, 479-481, and D495 contribute to the ATP site; these read TLGP, DGTTT, and NAA. Residues 527–546 form a disordered region; that stretch reads EEKPDVSASSGGMGGMGGMM. The segment covering 537-546 has biased composition (gly residues); it reads GGMGGMGGMM.

Belongs to the chaperonin (HSP60) family. In terms of assembly, forms a cylinder of 14 subunits composed of two heptameric rings stacked back-to-back. Interacts with the co-chaperonin GroES.

Its subcellular location is the cytoplasm. The catalysed reaction is ATP + H2O + a folded polypeptide = ADP + phosphate + an unfolded polypeptide.. In terms of biological role, together with its co-chaperonin GroES, plays an essential role in assisting protein folding. The GroEL-GroES system forms a nano-cage that allows encapsulation of the non-native substrate proteins and provides a physical environment optimized to promote and accelerate protein folding. The sequence is that of Chaperonin GroEL from Baumannia cicadellinicola subsp. Homalodisca coagulata.